A 344-amino-acid chain; its full sequence is tRNA N6-adenosine threonylcarbamoyltransferase (344 aa).

Positions 114 and 118 each coordinate Fe cation. Residues 136–140 (LVSGG), D170, G183, D187, and N278 contribute to the substrate site. D306 provides a ligand contact to Fe cation.

It belongs to the KAE1 / TsaD family. It depends on Fe(2+) as a cofactor.

It is found in the cytoplasm. It catalyses the reaction L-threonylcarbamoyladenylate + adenosine(37) in tRNA = N(6)-L-threonylcarbamoyladenosine(37) in tRNA + AMP + H(+). Its function is as follows. Required for the formation of a threonylcarbamoyl group on adenosine at position 37 (t(6)A37) in tRNAs that read codons beginning with adenine. Is involved in the transfer of the threonylcarbamoyl moiety of threonylcarbamoyl-AMP (TC-AMP) to the N6 group of A37, together with TsaE and TsaB. TsaD likely plays a direct catalytic role in this reaction. In Mycobacteroides abscessus (strain ATCC 19977 / DSM 44196 / CCUG 20993 / CIP 104536 / JCM 13569 / NCTC 13031 / TMC 1543 / L948) (Mycobacterium abscessus), this protein is tRNA N6-adenosine threonylcarbamoyltransferase.